A 127-amino-acid chain; its full sequence is Glycine cleavage system H protein 2 (127 aa).

The Lipoyl-binding domain occupies 24–105 (SVTVGISDHA…PYGSWIFKLK (82 aa)). The residue at position 65 (K65) is an N6-lipoyllysine.

It belongs to the GcvH family. In terms of assembly, the glycine cleavage system is composed of four proteins: P, T, L and H. The cofactor is (R)-lipoate.

Functionally, the glycine cleavage system catalyzes the degradation of glycine. The H protein shuttles the methylamine group of glycine from the P protein to the T protein. The polypeptide is Glycine cleavage system H protein 2 (Pseudomonas putida (strain ATCC 47054 / DSM 6125 / CFBP 8728 / NCIMB 11950 / KT2440)).